The sequence spans 227 residues: uncharacterized protein (227 aa).

Transmembrane regions (helical) follow at residues Met-109–Ile-128, Ala-173–Thr-192, and Ala-199–Gly-221.

It is found in the cell membrane. This is an uncharacterized protein from Archaeoglobus fulgidus (strain ATCC 49558 / DSM 4304 / JCM 9628 / NBRC 100126 / VC-16).